A 71-amino-acid polypeptide reads, in one-letter code: Potassium voltage-gated channel subfamily E member 2 (71 aa).

A helical membrane pass occupies residues 7-27 (VILYLMVMIGMFSFIIVAILV). At 28 to 71 (STVKSKRREHSNDPYHQYIVEDWQEKYKSQILHFEEAKATIHEN) the chain is on the cytoplasmic side.

It belongs to the potassium channel KCNE family. As to quaternary structure, interacts with KCNB1. Associates with KCNH2/ERG1. May associate with KCNQ2 and KCNQ3. Associates with HCN1 and probably HCN2. Heteromultimer with KCNC2. Interacts with KCNC2. Interacts with KCNQ1; forms a heterooligomer complex that targets to the membrane raft and leading to currents with an apparently instantaneous activation, a rapid deactivation process and a linear current-voltage relationship and decreases the amplitude of the outward current. Detected in heart; expression is highest in the SA node and the right atrium, and barely detectable in the ventricle.

It localises to the cell membrane. Its subcellular location is the apical cell membrane. Functionally, ancillary protein that functions as a regulatory subunit of the voltage-gated potassium (Kv) channel complex composed of pore-forming and potassium-conducting alpha subunits and of regulatory beta subunits. KCNE2 beta subunit modulates the gating kinetics and enhances stability of the channel complex. Alters the gating of the delayed rectifier Kv channel containing KCNB1 alpha subunit. Associates with KCNH2/HERG alpha subunit Kv channel to form the rapidly activating component of the delayed rectifying potassium current (IKr) in heart. May associate with KCNQ2 and/or KCNQ3 alpha subunits to modulate the native M-type current. May associate with HCN1 and HCN2 channel subunits to increase potassium current. Forms a heterooligomer complex with KCNQ1/KVLQT1 alpha subunits which leads to currents with an apparently instantaneous activation, a rapid deactivation process and a linear current-voltage relationship and decreases the amplitude of the outward current. KCNQ1-KCNE2 channel associates with Na(+)-coupled myo-inositol symporter in the apical membrane of choroid plexus epithelium and regulates the myo-inositol gradient between blood and cerebrospinal fluid with an impact on neuron excitability. The protein is Potassium voltage-gated channel subfamily E member 2 (KCNE2) of Oryctolagus cuniculus (Rabbit).